The sequence spans 456 residues: Exodeoxyribonuclease 7 large subunit (456 aa).

It belongs to the XseA family. Heterooligomer composed of large and small subunits.

The protein localises to the cytoplasm. It carries out the reaction Exonucleolytic cleavage in either 5'- to 3'- or 3'- to 5'-direction to yield nucleoside 5'-phosphates.. In terms of biological role, bidirectionally degrades single-stranded DNA into large acid-insoluble oligonucleotides, which are then degraded further into small acid-soluble oligonucleotides. This chain is Exodeoxyribonuclease 7 large subunit, found in Shigella dysenteriae serotype 1 (strain Sd197).